The sequence spans 189 residues: Major capsid protein (189 aa).

Basic residues-rich tracts occupy residues 1–18 and 32–42; these read MPTR…RPRR and QSRRPRRRNKR. The tract at residues 1-50 is disordered; sequence MPTRSRSKANQRRRRPRRVVVVAPSMAQPRTQSRRPRRRNKRGGGLNGSH.

This sequence belongs to the luteoviruses capsid protein family.

It is found in the virion. Its function is as follows. Major capsid protein. The polypeptide is Major capsid protein (Pea enation mosaic virus-1 (strain WSG) (PEMV-1)).